Consider the following 385-residue polypeptide: Queuine tRNA-ribosyltransferase (385 aa).

Asp-93 (proton acceptor) is an active-site residue. Residues 93-97, Asp-147, Gln-191, and Gly-218 contribute to the substrate site; that span reads DSGGF. The segment at 249 to 255 is RNA binding; the sequence is GVGKPED. Asp-268 acts as the Nucleophile in catalysis. Residues 273 to 277 form an RNA binding; important for wobble base 34 recognition region; that stretch reads TRNAR. Positions 306, 308, 311, and 337 each coordinate Zn(2+).

Belongs to the queuine tRNA-ribosyltransferase family. Homodimer. Within each dimer, one monomer is responsible for RNA recognition and catalysis, while the other monomer binds to the replacement base PreQ1. The cofactor is Zn(2+).

The enzyme catalyses 7-aminomethyl-7-carbaguanine + guanosine(34) in tRNA = 7-aminomethyl-7-carbaguanosine(34) in tRNA + guanine. It participates in tRNA modification; tRNA-queuosine biosynthesis. Catalyzes the base-exchange of a guanine (G) residue with the queuine precursor 7-aminomethyl-7-deazaguanine (PreQ1) at position 34 (anticodon wobble position) in tRNAs with GU(N) anticodons (tRNA-Asp, -Asn, -His and -Tyr). Catalysis occurs through a double-displacement mechanism. The nucleophile active site attacks the C1' of nucleotide 34 to detach the guanine base from the RNA, forming a covalent enzyme-RNA intermediate. The proton acceptor active site deprotonates the incoming PreQ1, allowing a nucleophilic attack on the C1' of the ribose to form the product. After dissociation, two additional enzymatic reactions on the tRNA convert PreQ1 to queuine (Q), resulting in the hypermodified nucleoside queuosine (7-(((4,5-cis-dihydroxy-2-cyclopenten-1-yl)amino)methyl)-7-deazaguanosine). In Pasteurella multocida (strain Pm70), this protein is Queuine tRNA-ribosyltransferase.